Here is a 146-residue protein sequence, read N- to C-terminus: MFVGEYYHSLDEKGRLIVPNNFRQLLGETFYLTRGFERCLNIYTITDWNNFSEIISSFSPTDDLMRRLCRFWFSGSVQVTTDKLGRILIPSFLIDYAELYKDVVIIGAGRHIEIWAKERWEEFNKEENILESMKEINEKVSELWKR.

2 consecutive SpoVT-AbrB domains span residues 5 to 47 (EYYH…TITD) and 76 to 119 (SVQV…AKER).

Belongs to the MraZ family. Forms oligomers.

The protein resides in the cytoplasm. Its subcellular location is the nucleoid. The sequence is that of Transcriptional regulator MraZ from Dictyoglomus turgidum (strain DSM 6724 / Z-1310).